The primary structure comprises 202 residues: Coiled-coil domain-containing protein 69 (202 aa).

Basic residues predominate over residues 1–11 (MGCRQSRHSRG). Disordered stretches follow at residues 1–20 (MGCRQSRHSRGKRAEKVEET) and 32–52 (GRILEGRHEEAGQVPQTSNAQ). A lipid anchor (N-myristoyl glycine) is attached at Gly-2. Residues 32-42 (GRILEGRHEEA) show a composition bias toward basic and acidic residues. Position 92 is a phosphoserine (Ser-92). Positions 112–146 (WEQELESLHHVIEMKNERIHELEKQLFLLEMLKEK) form a coiled coil.

Belongs to the CCDC69 family.

It localises to the cytoplasm. It is found in the cytoskeleton. The protein resides in the spindle. The protein localises to the midbody. In terms of biological role, may act as a scaffold to regulate the recruitment and assembly of spindle midzone components. Required for the localization of AURKB and PLK1 to the spindle midzone. This chain is Coiled-coil domain-containing protein 69 (Ccdc69), found in Mus musculus (Mouse).